Consider the following 807-residue polypeptide: Leucine--tRNA ligase (807 aa).

Residues 40 to 51 carry the 'HIGH' region motif; sequence PYPSGQGLHVGH. Positions 575–579 match the 'KMSKS' region motif; sequence KMSKS. ATP is bound at residue lysine 578.

This sequence belongs to the class-I aminoacyl-tRNA synthetase family.

It is found in the cytoplasm. The catalysed reaction is tRNA(Leu) + L-leucine + ATP = L-leucyl-tRNA(Leu) + AMP + diphosphate. The polypeptide is Leucine--tRNA ligase (Latilactobacillus sakei subsp. sakei (strain 23K) (Lactobacillus sakei subsp. sakei)).